A 310-amino-acid chain; its full sequence is Protoheme IX farnesyltransferase (310 aa).

The next 9 membrane-spanning stretches (helical) occupy residues 21–43 (LLKP…VAPV), 48–70 (MIAL…LNMW), 95–115 (GEAL…LGLA), 118–138 (LFAA…YSMW), 147–167 (IVIG…VATG), 174–194 (LFMF…LALF), 220–240 (VLVY…TGIG), 243–263 (LYLA…VRIW), and 289–309 (LFLH…GLGG).

This sequence belongs to the UbiA prenyltransferase family. Protoheme IX farnesyltransferase subfamily. In terms of assembly, interacts with CtaA.

It is found in the cell inner membrane. It carries out the reaction heme b + (2E,6E)-farnesyl diphosphate + H2O = Fe(II)-heme o + diphosphate. The protein operates within porphyrin-containing compound metabolism; heme O biosynthesis; heme O from protoheme: step 1/1. Its function is as follows. Converts heme B (protoheme IX) to heme O by substitution of the vinyl group on carbon 2 of heme B porphyrin ring with a hydroxyethyl farnesyl side group. In Cereibacter sphaeroides (strain KD131 / KCTC 12085) (Rhodobacter sphaeroides), this protein is Protoheme IX farnesyltransferase.